A 531-amino-acid chain; its full sequence is HERV-H LTR-associating protein 1 (531 aa).

Positions 1–29 are cleaved as a signal peptide; sequence MLGFLSRGPSMKLCMGLACVLSLWNTVSG. Residues Asn-79, Asn-143, and Asn-161 are each glycosylated (N-linked (GlcNAc...) asparagine). Disordered regions lie at residues 231–289 and 340–362; these read GTAR…RPPE and EKKPGGSLWETRSSPPTTAGTEE. 2 stretches are compositionally biased toward polar residues: residues 232-269 and 349-362; these read TARTSKPTTKSQKTLPSTSPGHWTQSTPWASALRSSPW and ETRSSPPTTAGTEE.

Its subcellular location is the secreted. This Homo sapiens (Human) protein is HERV-H LTR-associating protein 1 (HHLA1).